A 198-amino-acid chain; its full sequence is Transmembrane protein 9B (198 aa).

The N-terminal stretch at 1-33 (MATLWGGLLRLGSLLSLSCLALSVLLLAQLSDA) is a signal peptide. An N-linked (GlcNAc...) asparagine glycan is attached at asparagine 60. The helical transmembrane segment at 105–125 (IIIYLSILGLLLLYMVYLTLV) threads the bilayer. A phosphoserine mark is found at serine 142 and serine 189.

The protein belongs to the TMEM9 family. Post-translationally, N-glycosylated.

The protein localises to the lysosome membrane. The protein resides in the early endosome membrane. Functionally, enhances production of pro-inflammatory cytokines induced by TNF, IL1B, and TLR ligands. Has a role in TNF activation of both the NF-kappaB and MAPK pathways. This chain is Transmembrane protein 9B (TMEM9B), found in Homo sapiens (Human).